The primary structure comprises 357 residues: DNA integrity scanning protein DisA (357 aa).

Residues Val8 to Ile146 form the DAC domain. Residues Gly75, Leu93, and Met106–Thr110 each bind ATP.

The protein belongs to the DisA family. In terms of assembly, homooctamer. Mg(2+) is required as a cofactor.

The enzyme catalyses 2 ATP = 3',3'-c-di-AMP + 2 diphosphate. Participates in a DNA-damage check-point that is active prior to asymmetric division when DNA is damaged. DisA forms globular foci that rapidly scan along the chromosomes during sporulation, searching for lesions. When a lesion is present, DisA pauses at the lesion site. This triggers a cellular response that culminates in a temporary block in sporulation initiation. Functionally, also has diadenylate cyclase activity, catalyzing the condensation of 2 ATP molecules into cyclic di-AMP (c-di-AMP). c-di-AMP acts as a signaling molecule that couples DNA integrity with progression of sporulation. The rise in c-di-AMP level generated by DisA while scanning the chromosome, operates as a positive signal that advances sporulation; upon encountering a lesion, the DisA focus arrests at the damaged site and halts c-di-AMP synthesis. This Bacillus cereus (strain AH187) protein is DNA integrity scanning protein DisA.